A 284-amino-acid chain; its full sequence is Tropomyosin alpha-1 chain (284 aa).

N-acetylmethionine is present on M1. The segment at 1–38 is disordered; sequence MDAIKKKMQMLKLDKENALDRAEQAEADKKAAEDRSKQ. The stretch at 1-284 forms a coiled coil; the sequence is MDAIKKKMQM…DHALNDMTSI (284 aa). A compositionally biased stretch (basic and acidic residues) spans 12–38; sequence KLDKENALDRAEQAEADKKAAEDRSKQ. Phosphoserine is present on residues A31, S45, and K51. The segment at 116 to 136 is disordered; that stretch reads AEKAADESERGMKVIESRAQK. Residues S174, S186, and S206 each carry the phosphoserine modification. An N6-acetyllysine modification is found at K213. S252 is modified (phosphoserine). Y261 carries the post-translational modification Phosphotyrosine. S271 bears the Phosphoserine mark. S283 carries the phosphoserine; by DAPK1 modification.

The protein belongs to the tropomyosin family. As to quaternary structure, homodimer. Heterodimer of an alpha (TPM1, TPM3 or TPM4) and a beta (TPM2) chain. Interacts with HRG (via the HRR domain); the interaction contributes to the antiangiogenic properties of the histidine/proline-rich region (HRR) of HRG. Interacts (via N-terminus) with LMOD2 (via N-terminus) and TMOD1 (via N-terminus). Post-translationally, phosphorylated at Ser-283 by DAPK1 in response to oxidative stress and this phosphorylation enhances stress fiber formation in endothelial cells. Detected in primary breast cancer tissues but undetectable in normal breast tissues in Sudanese patients. Isoform 1 is expressed in adult and fetal skeletal muscle and cardiac tissues, with higher expression levels in the cardiac tissues. Isoform 10 is expressed in adult and fetal cardiac tissues, but not in skeletal muscle.

It localises to the cytoplasm. Its subcellular location is the cytoskeleton. In terms of biological role, binds to actin filaments in muscle and non-muscle cells. Plays a central role, in association with the troponin complex, in the calcium dependent regulation of vertebrate striated muscle contraction. Smooth muscle contraction is regulated by interaction with caldesmon. In non-muscle cells is implicated in stabilizing cytoskeleton actin filaments. In Homo sapiens (Human), this protein is Tropomyosin alpha-1 chain (TPM1).